A 234-amino-acid chain; its full sequence is MLTCKQYELLLFIHNHMKETGVPPSFDEMKTALELTSKSGIHRLITALEERGFIRRLPNRARAVEVIRLPEKITFNLSSARKISPSVIENNKRKISKNSDNFDLEEKKNIIIPIMGRIAAAVPISAIQQQINTLCLPQDMISLGEHYALEVKDDSMIEAGILDKDIIIVRRQNTATSGEIIIALIDKEEVTFKRYRRKGNSITLEAANPHYETRIYRPERVQIQGKLIGLIRKY.

Positions 26 to 46 (FDEMKTALELTSKSGIHRLIT) form a DNA-binding region, H-T-H motif. Catalysis depends on for autocatalytic cleavage activity residues Ser155 and Lys193.

This sequence belongs to the peptidase S24 family. Homodimer.

The enzyme catalyses Hydrolysis of Ala-|-Gly bond in repressor LexA.. Represses a number of genes involved in the response to DNA damage (SOS response), including recA and lexA. In the presence of single-stranded DNA, RecA interacts with LexA causing an autocatalytic cleavage which disrupts the DNA-binding part of LexA, leading to derepression of the SOS regulon and eventually DNA repair. The polypeptide is LexA repressor (Bartonella henselae (strain ATCC 49882 / DSM 28221 / CCUG 30454 / Houston 1) (Rochalimaea henselae)).